Here is a 274-residue protein sequence, read N- to C-terminus: Phosphate import ATP-binding protein PstB (274 aa).

The 242-residue stretch at 28–269 (VTVRDLNFYY…PNDRRTQDYI (242 aa)) folds into the ABC transporter domain. 60-67 (GPSGCGKS) is a binding site for ATP.

The protein belongs to the ABC transporter superfamily. Phosphate importer (TC 3.A.1.7) family. As to quaternary structure, the complex is composed of two ATP-binding proteins (PstB), two transmembrane proteins (PstC and PstA) and a solute-binding protein (PstS).

The protein localises to the cell inner membrane. The enzyme catalyses phosphate(out) + ATP + H2O = ADP + 2 phosphate(in) + H(+). Functionally, part of the ABC transporter complex PstSACB involved in phosphate import. Responsible for energy coupling to the transport system. In Rhodopseudomonas palustris (strain HaA2), this protein is Phosphate import ATP-binding protein PstB.